Consider the following 313-residue polypeptide: Serine/threonine-protein phosphatase PP2A-4 catalytic subunit (313 aa).

Mn(2+)-binding residues include aspartate 61, histidine 63, aspartate 89, and asparagine 121. The active-site Proton donor is histidine 122. Mn(2+) contacts are provided by histidine 171 and histidine 245. Residue leucine 313 is modified to Leucine methyl ester.

The protein belongs to the PPP phosphatase family. PP-2A subfamily. In terms of assembly, PP2A consists of a common heterodimeric core enzyme, composed of a 36 kDa catalytic subunit (subunit C) and a 65 kDa constant regulatory subunit (subunit A), that associates with a variety of regulatory subunits such as subunits B (the R2/B/PR55/B55, R3/B''/PR72/PR130/PR59 and R5/B'/B56 families). Interacts with SIC/RON3. Requires Mn(2+) as cofactor. Reversibly methyl esterified on Leu-313 by leucine carboxyl methyltransferase 1 (LCMT1) and pectin methylesterase 1 (PME1). Carboxyl methylation influences the affinity of the catalytic subunit for the different regulatory subunits, thereby modulating the PP2A holoenzyme's substrate specificity, enzyme activity and cellular localization. Post-translationally, phosphorylation of either threonine (by autophosphorylation-activated protein kinase) or tyrosine results in inactivation of the phosphatase. Auto-dephosphorylation has been suggested as a mechanism for reactivation.

The protein localises to the cytoplasm. It catalyses the reaction O-phospho-L-seryl-[protein] + H2O = L-seryl-[protein] + phosphate. The enzyme catalyses O-phospho-L-threonyl-[protein] + H2O = L-threonyl-[protein] + phosphate. Functionally, functions redundantly with PP2A3, and is involved in establishing auxin gradients, apical-basal axis of polarity and root and shoot apical meristem during embryogenesis. May dephosphorylate PIN1 and regulate its subcellular distribution for polar auxin transport. The holoenzyme composed of PP2AA1, PP2A4 and B'ZETA or B'ETA acts as a negative regulator of plant innate immunity by controlling BAK1 phosphorylation state and activation in surface-localized immune receptor complexes. This chain is Serine/threonine-protein phosphatase PP2A-4 catalytic subunit, found in Arabidopsis thaliana (Mouse-ear cress).